The sequence spans 188 residues: Elongation factor P (188 aa).

Residue K34 is modified to N6-(3,6-diaminohexanoyl)-5-hydroxylysine.

This sequence belongs to the elongation factor P family. Post-translationally, is beta-lysylated on the epsilon-amino group of Lys-34 by the combined action of EpmA and EpmB, and then hydroxylated on the C5 position of the same residue by EpmC. Lysylation is critical for the stimulatory effect of EF-P on peptide-bond formation. The lysylation moiety would extend toward the peptidyltransferase center and stabilize the terminal 3-CCA end of the tRNA. The hydroxylation of the C5 position on Lys-34 would allow additional potential stabilizing hydrogen-bond interactions with the P-tRNA.

It is found in the cytoplasm. It functions in the pathway protein biosynthesis; polypeptide chain elongation. In terms of biological role, involved in peptide bond synthesis. Alleviates ribosome stalling that occurs when 3 or more consecutive Pro residues or the sequence PPG is present in a protein, possibly by augmenting the peptidyl transferase activity of the ribosome. Modification of Lys-34 is required for alleviation. The sequence is that of Elongation factor P from Salmonella arizonae (strain ATCC BAA-731 / CDC346-86 / RSK2980).